Reading from the N-terminus, the 353-residue chain is Protein RecA (353 aa).

ATP is bound at residue 65-72 (GPESSGKT). Residues 334-345 (DAERAGAEREDN) show a composition bias toward basic and acidic residues. The disordered stretch occupies residues 334-353 (DAERAGAEREDNAAADDENF).

This sequence belongs to the RecA family.

The protein localises to the cytoplasm. Can catalyze the hydrolysis of ATP in the presence of single-stranded DNA, the ATP-dependent uptake of single-stranded DNA by duplex DNA, and the ATP-dependent hybridization of homologous single-stranded DNAs. It interacts with LexA causing its activation and leading to its autocatalytic cleavage. This Edwardsiella ictaluri (strain 93-146) protein is Protein RecA.